Reading from the N-terminus, the 850-residue chain is Mitogen-activated protein kinase kinase kinase 11 (850 aa).

Ser11 carries the phosphoserine modification. Over residues 18-31 the composition is skewed to gly residues; that stretch reads GSGSGGGGGSGGVR. Residues 18–37 are disordered; it reads GSGSGGGGGSGGVRPEGSPK. Ser35 carries the post-translational modification Phosphoserine. The region spanning 42–106 is the SH3 domain; it reads YANPVWTALF…PSNYVSRGGG (65 aa). In terms of domain architecture, Protein kinase spans 118 to 380; that stretch reads LRLEEVIGIG…ASILQQLEAL (263 aa). Residues 124–132 and Lys145 each bind ATP; that span reads IGIGGFGKV. Asp242 functions as the Proton acceptor in the catalytic mechanism. Thr278 is subject to Phosphothreonine; by autocatalysis. Residue Ser282 is modified to Phosphoserine; by autocatalysis and MAP4K1. A Phosphoserine modification is found at Ser395. Leucine-zipper stretches follow at residues 404–425 and 439–460; these read IQGLFDELRAKEKELLSREEEL and LRRREHLLAQWELEVFERELTL. A phosphoserine mark is found at Ser508, Ser525, Ser549, Ser556, and Ser557. Residues 536-850 are disordered; the sequence is LEPAESGQTW…QAPWAPEAGP (315 aa). Basic and acidic residues predominate over residues 551-563; the sequence is RRLDDSSNGERRA. The span at 598–610 shows a compositional bias: low complexity; the sequence is SSPLGSPSTPPAL. Ser655 bears the Phosphoserine mark. Residues 677-693 show a composition bias toward pro residues; that stretch reads TAPPPAQMASPCPPDLP. Thr712 is modified (phosphothreonine). Residues Ser728, Ser731, Ser743, Ser751, Ser761, Ser773, Ser792, Ser796, and Ser818 each carry the phosphoserine modification. A compositionally biased stretch (pro residues) spans 790–802; the sequence is RPSPLPSPQPAPR. Over residues 803–819 the composition is skewed to low complexity; the sequence is RAPWTLFPDSDPFWDSP.

It belongs to the protein kinase superfamily. STE Ser/Thr protein kinase family. MAP kinase kinase kinase subfamily. As to quaternary structure, homodimer; undergoes dimerization during activation. Interacts with MAP2K4/MKK4. Interacts with MAP2K7/MKK7. Found in a complex with SH3RF1, RAC1, MAP2K7/MKK7, MAPK8IP1/JIP1 and MAPK8/JNK1. Mg(2+) is required as a cofactor. Autophosphorylation on serine and threonine residues within the activation loop plays a role in enzyme activation. Thr-278 is likely to be the main autophosphorylation site. Phosphorylation of Ser-556 and Ser-557 is induced by CDC42.

The protein localises to the cytoplasm. It is found in the cytoskeleton. The protein resides in the microtubule organizing center. Its subcellular location is the centrosome. It carries out the reaction L-seryl-[protein] + ATP = O-phospho-L-seryl-[protein] + ADP + H(+). The enzyme catalyses L-threonyl-[protein] + ATP = O-phospho-L-threonyl-[protein] + ADP + H(+). Homodimerization via the leucine zipper domains is required for autophosphorylation and subsequent activation. Activates the JUN N-terminal pathway. Required for serum-stimulated cell proliferation and for mitogen and cytokine activation of MAPK14 (p38), MAPK3 (ERK) and MAPK8 (JNK1) through phosphorylation and activation of MAP2K4/MKK4 and MAP2K7/MKK7. Plays a role in mitogen-stimulated phosphorylation and activation of BRAF, but does not phosphorylate BRAF directly. Influences microtubule organization during the cell cycle. This Rattus norvegicus (Rat) protein is Mitogen-activated protein kinase kinase kinase 11 (Map3k11).